The following is a 691-amino-acid chain: Histone-lysine N-methyltransferase Set8 (691 aa).

5 disordered regions span residues 1–22, 211–234, 345–381, 422–450, and 484–516; these read MIMV…AAAA, RSGL…SATT, PAAG…GDGG, SRRR…QPTN, and APAK…ATNG. The segment covering 220 to 232 has biased composition (low complexity); sequence SSHSSSSSGGASA. The segment covering 431–446 has biased composition (pro residues); it reads PQAPYQPQQPQPPPGT. Over residues 484 to 503 the composition is skewed to low complexity; that stretch reads APAKPRAALTKGSKTKTGSK. The SET domain occupies 555 to 676; the sequence is EGLQVRNFMG…PGEELTYDYG (122 aa). Residues 565-567, tyrosine 610, and 637-638 each bind S-adenosyl-L-methionine; these read KGR and NH.

It belongs to the class V-like SAM-binding methyltransferase superfamily. Histone-lysine methyltransferase family. PR/SET subfamily.

The protein localises to the nucleus. The protein resides in the chromosome. The catalysed reaction is L-lysyl(20)-[histone H4] + S-adenosyl-L-methionine = N(6)-methyl-L-lysyl(20)-[histone H4] + S-adenosyl-L-homocysteine + H(+). Functionally, histone methyltransferase that specifically monomethylates 'Lys-20' of histone H4. H4 'Lys-20' monomethylation is enriched during mitosis and represents a specific tag for epigenetic transcriptional repression. Mainly functions in euchromatin regions, thereby playing a central role in the silencing of euchromatic genes. Required for cell proliferation, possibly by contributing to the maintenance of proper higher-order structure of DNA and chromosome condensation during mitosis. In Drosophila pseudoobscura pseudoobscura (Fruit fly), this protein is Histone-lysine N-methyltransferase Set8.